A 341-amino-acid polypeptide reads, in one-letter code: GTP 3',8-cyclase (341 aa).

In terms of domain architecture, Radical SAM core spans threonine 17–glutamate 235. Position 26 (arginine 26) interacts with GTP. Residues cysteine 33 and cysteine 37 each contribute to the [4Fe-4S] cluster site. Residue tyrosine 39 coordinates S-adenosyl-L-methionine. A [4Fe-4S] cluster-binding site is contributed by cysteine 40. GTP is bound at residue arginine 77. Glycine 81 provides a ligand contact to S-adenosyl-L-methionine. Residue threonine 108 participates in GTP binding. Serine 132 serves as a coordination point for S-adenosyl-L-methionine. Residue lysine 169 participates in GTP binding. Position 203 (methionine 203) interacts with S-adenosyl-L-methionine. The [4Fe-4S] cluster site is built by cysteine 268 and cysteine 271. Residue arginine 273–arginine 275 coordinates GTP. Position 285 (cysteine 285) interacts with [4Fe-4S] cluster.

It belongs to the radical SAM superfamily. MoaA family. In terms of assembly, monomer and homodimer. [4Fe-4S] cluster serves as cofactor.

It carries out the reaction GTP + AH2 + S-adenosyl-L-methionine = (8S)-3',8-cyclo-7,8-dihydroguanosine 5'-triphosphate + 5'-deoxyadenosine + L-methionine + A + H(+). The protein operates within cofactor biosynthesis; molybdopterin biosynthesis. Its function is as follows. Catalyzes the cyclization of GTP to (8S)-3',8-cyclo-7,8-dihydroguanosine 5'-triphosphate. The polypeptide is GTP 3',8-cyclase (Streptomyces coelicolor (strain ATCC BAA-471 / A3(2) / M145)).